The primary structure comprises 282 residues: Protoheme IX farnesyltransferase (282 aa).

9 consecutive transmembrane segments (helical) span residues 9–29 (LAKP…FLLA), 39–59 (LPLF…GCVF), 79–99 (LVTG…LLIL), 102–122 (LVLY…GFIV), 139–159 (VLGG…VVNI), 165–185 (LALF…IAML), 210–230 (IMLF…VLGS), 231–251 (ADLF…YKSI), and 261–281 (VFAK…CLTM).

Belongs to the UbiA prenyltransferase family. Protoheme IX farnesyltransferase subfamily.

The protein resides in the cell inner membrane. It carries out the reaction heme b + (2E,6E)-farnesyl diphosphate + H2O = Fe(II)-heme o + diphosphate. Its pathway is porphyrin-containing compound metabolism; heme O biosynthesis; heme O from protoheme: step 1/1. Its function is as follows. Converts heme B (protoheme IX) to heme O by substitution of the vinyl group on carbon 2 of heme B porphyrin ring with a hydroxyethyl farnesyl side group. This chain is Protoheme IX farnesyltransferase, found in Francisella tularensis subsp. holarctica (strain FTNF002-00 / FTA).